We begin with the raw amino-acid sequence, 261 residues long: 3-methyl-2-oxobutanoate hydroxymethyltransferase (261 aa).

Mg(2+) is bound by residues Asp-44 and Asp-83. Residues 44–45, Asp-83, and Lys-112 contribute to the 3-methyl-2-oxobutanoate site; that span reads DS. Glu-114 contributes to the Mg(2+) binding site. Glu-181 functions as the Proton acceptor in the catalytic mechanism.

It belongs to the PanB family. As to quaternary structure, homodecamer; pentamer of dimers. The cofactor is Mg(2+).

Its subcellular location is the cytoplasm. The catalysed reaction is 3-methyl-2-oxobutanoate + (6R)-5,10-methylene-5,6,7,8-tetrahydrofolate + H2O = 2-dehydropantoate + (6S)-5,6,7,8-tetrahydrofolate. Its pathway is cofactor biosynthesis; (R)-pantothenate biosynthesis; (R)-pantoate from 3-methyl-2-oxobutanoate: step 1/2. Its function is as follows. Catalyzes the reversible reaction in which hydroxymethyl group from 5,10-methylenetetrahydrofolate is transferred onto alpha-ketoisovalerate to form ketopantoate. The sequence is that of 3-methyl-2-oxobutanoate hydroxymethyltransferase from Acidithiobacillus ferrooxidans (strain ATCC 23270 / DSM 14882 / CIP 104768 / NCIMB 8455) (Ferrobacillus ferrooxidans (strain ATCC 23270)).